The following is a 323-amino-acid chain: DNA repair and recombination protein RadA (323 aa).

ATP is bound at residue 114-121 (GEFGSGKT).

This sequence belongs to the eukaryotic RecA-like protein family.

Its function is as follows. Involved in DNA repair and in homologous recombination. Binds and assemble on single-stranded DNA to form a nucleoprotein filament. Hydrolyzes ATP in a ssDNA-dependent manner and promotes DNA strand exchange between homologous DNA molecules. This chain is DNA repair and recombination protein RadA, found in Picrophilus torridus (strain ATCC 700027 / DSM 9790 / JCM 10055 / NBRC 100828 / KAW 2/3).